A 238-amino-acid polypeptide reads, in one-letter code: 1-(5-phosphoribosyl)-5-[(5-phosphoribosylamino)methylideneamino] imidazole-4-carboxamide isomerase (238 aa).

The active-site Proton acceptor is the Asp8. The active-site Proton donor is the Asp129.

Belongs to the HisA/HisF family.

It localises to the cytoplasm. The catalysed reaction is 1-(5-phospho-beta-D-ribosyl)-5-[(5-phospho-beta-D-ribosylamino)methylideneamino]imidazole-4-carboxamide = 5-[(5-phospho-1-deoxy-D-ribulos-1-ylimino)methylamino]-1-(5-phospho-beta-D-ribosyl)imidazole-4-carboxamide. It functions in the pathway amino-acid biosynthesis; L-histidine biosynthesis; L-histidine from 5-phospho-alpha-D-ribose 1-diphosphate: step 4/9. The sequence is that of 1-(5-phosphoribosyl)-5-[(5-phosphoribosylamino)methylideneamino] imidazole-4-carboxamide isomerase from Anaeromyxobacter dehalogenans (strain 2CP-C).